Consider the following 416-residue polypeptide: ABSCISIC ACID-INSENSITIVE 5-like protein 5 (416 aa).

Residues 1-23 (MDGSMNLGNEPPGDGGGGGGLTR) are disordered. The span at 13-22 (GDGGGGGGLT) shows a compositional bias: gly residues. Residues S26, S45, and S86 each carry the phosphoserine modification. T135 is subject to Phosphothreonine. The segment at 300 to 326 (SEGIGKSNGDSSSLSPSPYMFNGGVRG) is disordered. The bZIP domain occupies 336–399 (VERRQRRMIK…KNQETEMRNL (64 aa)). A basic motif region spans residues 338-357 (RRQRRMIKNRESAARSRARK). Positions 364 to 385 (LEAEVAKLKEENDELQRKQARI) are leucine-zipper. Residues 388-416 (MQKNQETEMRNLLQGGPKKKLRRTESGPW) are disordered.

It belongs to the bZIP family. ABI5 subfamily. As to quaternary structure, DNA-binding heterodimer. Interacts with ARIA. Post-translationally, the activation by phosphorylation is induced by abscisic acid (ABA). Phosphorylated by SRK2C, SRK2D, SRK2E, SRK2F and SRK2I in vitro. As to expression, expressed in roots, leaves, flowers and siliques but not in seeds.

The protein resides in the nucleus. Functionally, involved in ABA and stress responses and acts as a positive component of glucose signal transduction. Functions as a transcriptional activator in the ABA-inducible expression of rd29B. Binds specifically to the ABA-responsive element (ABRE) of the rd29B gene promoter. This Arabidopsis thaliana (Mouse-ear cress) protein is ABSCISIC ACID-INSENSITIVE 5-like protein 5 (ABF2).